Here is a 73-residue protein sequence, read N- to C-terminus: UPF0435 protein lwe1727 (73 aa).

The protein belongs to the UPF0435 family.

This chain is UPF0435 protein lwe1727, found in Listeria welshimeri serovar 6b (strain ATCC 35897 / DSM 20650 / CCUG 15529 / CIP 8149 / NCTC 11857 / SLCC 5334 / V8).